A 304-amino-acid polypeptide reads, in one-letter code: Urease accessory protein UreD 2 (304 aa).

It belongs to the UreD family. As to quaternary structure, ureD, UreF and UreG form a complex that acts as a GTP-hydrolysis-dependent molecular chaperone, activating the urease apoprotein by helping to assemble the nickel containing metallocenter of UreC. The UreE protein probably delivers the nickel.

Its subcellular location is the cytoplasm. In terms of biological role, required for maturation of urease via the functional incorporation of the urease nickel metallocenter. Its function is as follows. Disrupting the ure2 operon has no effect on urease activity or pathogen survival in BALB/c mice when administered orally. This Brucella abortus (strain 2308) protein is Urease accessory protein UreD 2.